A 130-amino-acid chain; its full sequence is Glycine cleavage system H protein (130 aa).

One can recognise a Lipoyl-binding domain in the interval 24–106 (TVTIGITDHA…YDDGWFFKVK (83 aa)). K65 carries the post-translational modification N6-lipoyllysine.

The protein belongs to the GcvH family. The glycine cleavage system is composed of four proteins: P, T, L and H. It depends on (R)-lipoate as a cofactor.

In terms of biological role, the glycine cleavage system catalyzes the degradation of glycine. The H protein shuttles the methylamine group of glycine from the P protein to the T protein. In Saccharophagus degradans (strain 2-40 / ATCC 43961 / DSM 17024), this protein is Glycine cleavage system H protein.